The primary structure comprises 369 residues: Trichocyst matrix protein T1-B (369 aa).

The signal sequence occupies residues methionine 1 to alanine 16. Positions isoleucine 17 to glycine 55 are excised as a propeptide. Positions glycine 56 to serine 180 form a coiled coil. Residues isoleucine 190 to asparagine 225 constitute a propeptide that is removed on maturation. A coiled-coil region spans residues lysine 262–glutamine 354.

It belongs to the TMP family. Post-translationally, two components are produced by post-translational processing from the precursor peptide.

It is found in the trichocyst. Functionally, structural protein that crystallize inside the trichocyst matrix. The chain is Trichocyst matrix protein T1-B (T1B) from Paramecium tetraurelia.